Consider the following 827-residue polypeptide: Endoribonuclease YSH1 (827 aa).

Zn(2+)-binding residues include histidine 96, histidine 98, aspartate 100, histidine 101, histidine 184, and aspartate 205. The active-site Proton donor is the histidine 426. Histidine 448 contacts Zn(2+). Residues 583 to 592 (EDDVAEEEED) are compositionally biased toward acidic residues. Disordered regions lie at residues 583–621 (EDDVAEEEEDKEVKQEVEDVTMEGEVKDETAEEVKKEEE) and 802–827 (DREENGEVKAEDEEKVKAEEKVKEEE). Over residues 606-621 (GEVKDETAEEVKKEEE) the composition is skewed to basic and acidic residues.

It belongs to the metallo-beta-lactamase superfamily. RNA-metabolizing metallo-beta-lactamase-like family. CPSF2/YSH1 subfamily.

The protein resides in the nucleus. Component of the cleavage factor I (CF I) involved in pre-mRNA 3'-end processing. This chain is Endoribonuclease YSH1 (YSH1), found in Yarrowia lipolytica (strain CLIB 122 / E 150) (Yeast).